The following is a 90-amino-acid chain: Keratin-associated protein 19-1 (90 aa).

The tract at residues 5–84 is 26 X 2 AA repeats of G-[YCGS]; sequence GSYYGGLGYS…CCRPSYNGGY (80 aa).

It belongs to the KRTAP type 19 family. In terms of assembly, interacts with hair keratins. Detected in the upper portion of the hair cortex.

Its function is as follows. In the hair cortex, hair keratin intermediate filaments are embedded in an interfilamentous matrix, consisting of hair keratin-associated proteins (KRTAP), which are essential for the formation of a rigid and resistant hair shaft through their extensive disulfide bond cross-linking with abundant cysteine residues of hair keratins. The matrix proteins include the high-sulfur and high-glycine-tyrosine keratins. This is Keratin-associated protein 19-1 (KRTAP19-1) from Homo sapiens (Human).